A 422-amino-acid chain; its full sequence is 26S proteasome non-ATPase regulatory subunit 11 (422 aa).

Ala-2 bears the N-acetylalanine mark. A phosphoserine mark is found at Ser-14 and Ser-23. The PCI domain occupies 224 to 392 (DWKTAYSYFY…GVLIIFDEPP (169 aa)). Lys-274 is covalently cross-linked (Glycyl lysine isopeptide (Lys-Gly) (interchain with G-Cter in SUMO2)).

Belongs to the proteasome subunit S9 family. As to quaternary structure, component of the 19S proteasome regulatory particle complex. The 26S proteasome consists of a 20S core particle (CP) and two 19S regulatory subunits (RP). The regulatory particle is made of a lid composed of 9 subunits including PSMD11, a base containing 6 ATPases and few additional components.

Component of the 26S proteasome, a multiprotein complex involved in the ATP-dependent degradation of ubiquitinated proteins. This complex plays a key role in the maintenance of protein homeostasis by removing misfolded or damaged proteins, which could impair cellular functions, and by removing proteins whose functions are no longer required. Therefore, the proteasome participates in numerous cellular processes, including cell cycle progression, apoptosis, or DNA damage repair. In the complex, PSMD11 is required for proteasome assembly. Plays a key role in increased proteasome activity in embryonic stem cells (ESCs): its high expression in ESCs promotes enhanced assembly of the 26S proteasome, followed by higher proteasome activity. The protein is 26S proteasome non-ATPase regulatory subunit 11 (Psmd11) of Mus musculus (Mouse).